The chain runs to 78 residues: Acyl carrier protein (78 aa).

In terms of domain architecture, Carrier spans 1–77; the sequence is MSEVEKKVID…DAIDYIEKNL (77 aa). The residue at position 37 (Ser37) is an O-(pantetheine 4'-phosphoryl)serine.

Belongs to the acyl carrier protein (ACP) family. Post-translationally, 4'-phosphopantetheine is transferred from CoA to a specific serine of apo-ACP by AcpS. This modification is essential for activity because fatty acids are bound in thioester linkage to the sulfhydryl of the prosthetic group.

The protein resides in the cytoplasm. Its pathway is lipid metabolism; fatty acid biosynthesis. Its function is as follows. Carrier of the growing fatty acid chain in fatty acid biosynthesis. The sequence is that of Acyl carrier protein from Porphyromonas gingivalis (strain ATCC 33277 / DSM 20709 / CIP 103683 / JCM 12257 / NCTC 11834 / 2561).